The following is a 262-amino-acid chain: Type III pantothenate kinase (262 aa).

Residue 6–13 participates in ATP binding; sequence DVGNTNAV. Residues Tyr-100 and 107–110 contribute to the substrate site; that span reads GADR. Asp-109 (proton acceptor) is an active-site residue. K(+) is bound at residue Asp-129. Residue Thr-132 coordinates ATP. Thr-184 is a binding site for substrate.

It belongs to the type III pantothenate kinase family. As to quaternary structure, homodimer. Requires NH4(+) as cofactor. The cofactor is K(+).

It is found in the cytoplasm. The enzyme catalyses (R)-pantothenate + ATP = (R)-4'-phosphopantothenate + ADP + H(+). It functions in the pathway cofactor biosynthesis; coenzyme A biosynthesis; CoA from (R)-pantothenate: step 1/5. Catalyzes the phosphorylation of pantothenate (Pan), the first step in CoA biosynthesis. The chain is Type III pantothenate kinase from Bacillus cereus (strain G9842).